A 328-amino-acid chain; its full sequence is uncharacterized protein (328 aa).

Residues 1–25 form the signal peptide; sequence MKLFNFKKLSMLIAGFTLVTSPALA.

It belongs to the bacterial solute-binding protein 7 family.

The protein resides in the periplasm. This is an uncharacterized protein from Haemophilus influenzae (strain ATCC 51907 / DSM 11121 / KW20 / Rd).